The sequence spans 335 residues: Glycerol-3-phosphate dehydrogenase [NAD(P)+] (335 aa).

NADPH is bound by residues Trp15, Arg36, and Lys109. Sn-glycerol 3-phosphate is bound by residues Lys109, Gly137, and Ser139. Ala141 contacts NADPH. Sn-glycerol 3-phosphate contacts are provided by Lys192, Asp245, Ser255, Arg256, and Asn257. Catalysis depends on Lys192, which acts as the Proton acceptor. NADPH is bound at residue Arg256. Residues Leu279 and Glu281 each coordinate NADPH.

This sequence belongs to the NAD-dependent glycerol-3-phosphate dehydrogenase family.

It is found in the cytoplasm. It carries out the reaction sn-glycerol 3-phosphate + NAD(+) = dihydroxyacetone phosphate + NADH + H(+). It catalyses the reaction sn-glycerol 3-phosphate + NADP(+) = dihydroxyacetone phosphate + NADPH + H(+). The protein operates within membrane lipid metabolism; glycerophospholipid metabolism. Functionally, catalyzes the reduction of the glycolytic intermediate dihydroxyacetone phosphate (DHAP) to sn-glycerol 3-phosphate (G3P), the key precursor for phospholipid synthesis. This chain is Glycerol-3-phosphate dehydrogenase [NAD(P)+], found in Beijerinckia indica subsp. indica (strain ATCC 9039 / DSM 1715 / NCIMB 8712).